A 299-amino-acid chain; its full sequence is Taste receptor type 2 member 50 (299 aa).

M1 is a topological domain (extracellular). The chain crosses the membrane as a helical span at residues 2 to 22; sequence VTFLHIFFSILILVLFVLGNF. Topologically, residues 23 to 55 are cytoplasmic; that stretch reads ANGFIALVNFIDLVKRKKISSADQILTALAVSR. The helical transmembrane segment at 56–76 threads the bilayer; sequence IGLLWALLLNWYLTVLNPAFY. At 77–87 the chain is on the extracellular side; the sequence is SVELRITSYNA. The helical transmembrane segment at 88–108 threads the bilayer; the sequence is WVVTNHFSMWLAASLSIFYLL. Residues 109-126 are Cytoplasmic-facing; it reads KIANFSNLIFLHLKRRVR. A helical membrane pass occupies residues 127–147; it reads SVILVILLGPLTFLVCHLFVA. Residues 148–181 lie on the Extracellular side of the membrane; the sequence is NMDESMSAEEYEGNMTGKLKLRNTVHLSYLTVTT. An N-linked (GlcNAc...) asparagine glycan is attached at N161. The helical transmembrane segment at 182–202 threads the bilayer; it reads LWSFIPFTLSLISFLMLICSL. Residues 203–229 lie on the Cytoplasmic side of the membrane; it reads CKHVKKMQLHGEGSQDLSTKVHIKALQ. The chain crosses the membrane as a helical span at residues 230–250; sequence TLISFLLLCAIFFLFLIISIW. At 251–259 the chain is on the extracellular side; that stretch reads NPRRLQNDP. Residues 260-280 form a helical membrane-spanning segment; sequence VVVVSKAVGNIYLALDSFILI. Over 281-299 the chain is Cytoplasmic; that stretch reads WRTKKLKHTFLLILCQIRC.

Belongs to the G-protein coupled receptor T2R family.

It localises to the membrane. Its function is as follows. Receptor that may play a role in the perception of bitterness and is gustducin-linked. May play a role in sensing the chemical composition of the gastrointestinal content. The activity of this receptor may stimulate alpha gustducin, mediate PLC-beta-2 activation and lead to the gating of TRPM5. In Pongo pygmaeus (Bornean orangutan), this protein is Taste receptor type 2 member 50 (TAS2R50).